We begin with the raw amino-acid sequence, 623 residues long: Transketolase (623 aa).

Position 1 is an N-acetylmethionine (Met-1). The residue at position 3 (Ser-3) is a Phosphoserine. An N6-acetyllysine mark is found at Lys-6 and Lys-11. Substrate is bound at residue His-37. Residues Ser-40 and His-77 each coordinate thiamine diphosphate. Ser-104 carries the post-translational modification Phosphoserine. A thiamine diphosphate-binding site is contributed by 123–125; the sequence is GSL. At Lys-144 the chain carries N6-acetyllysine. Position 155 (Asp-155) interacts with Mg(2+). Gly-156 and Asn-185 together coordinate thiamine diphosphate. 2 residues coordinate Mg(2+): Asn-185 and Leu-187. An N6-acetyllysine mark is found at Lys-204, Lys-232, and Lys-241. Residues Lys-244 and His-258 each contribute to the thiamine diphosphate site. His-258 serves as a coordination point for substrate. Residue Lys-260 is modified to N6-acetyllysine. At Tyr-275 the chain carries Phosphotyrosine. Thr-287 carries the phosphothreonine modification. Ser-295 carries the phosphoserine modification. Positions 318 and 345 each coordinate substrate. A Phosphoserine modification is found at Ser-345. Residue Lys-352 forms a Glycyl lysine isopeptide (Lys-Gly) (interchain with G-Cter in SUMO2) linkage. The active-site Proton donor is the Glu-366. Phe-392 contributes to the thiamine diphosphate binding site. Residues His-416 and Asp-424 each contribute to the substrate site. Gln-428 contributes to the thiamine diphosphate binding site. Arg-474 lines the substrate pocket. An N6-acetyllysine mark is found at Lys-538 and Lys-603.

Belongs to the transketolase family. As to quaternary structure, homodimer. Mg(2+) is required as a cofactor. Ca(2+) serves as cofactor. Requires Mn(2+) as cofactor. The cofactor is Co(2+). It depends on thiamine diphosphate as a cofactor.

It carries out the reaction D-sedoheptulose 7-phosphate + D-glyceraldehyde 3-phosphate = aldehydo-D-ribose 5-phosphate + D-xylulose 5-phosphate. Functionally, catalyzes the transfer of a two-carbon ketol group from a ketose donor to an aldose acceptor, via a covalent intermediate with the cofactor thiamine pyrophosphate. This Homo sapiens (Human) protein is Transketolase (TKT).